Consider the following 441-residue polypeptide: Glutamyl-tRNA reductase (441 aa).

Substrate contacts are provided by residues 47 to 50, S104, 109 to 111, and Q115; these read TCNR and EAQ. C48 acts as the Nucleophile in catalysis. 184-189 lines the NADP(+) pocket; the sequence is GAGEMG.

Belongs to the glutamyl-tRNA reductase family. As to quaternary structure, homodimer.

The enzyme catalyses (S)-4-amino-5-oxopentanoate + tRNA(Glu) + NADP(+) = L-glutamyl-tRNA(Glu) + NADPH + H(+). The protein operates within porphyrin-containing compound metabolism; protoporphyrin-IX biosynthesis; 5-aminolevulinate from L-glutamyl-tRNA(Glu): step 1/2. In terms of biological role, catalyzes the NADPH-dependent reduction of glutamyl-tRNA(Glu) to glutamate 1-semialdehyde (GSA). The sequence is that of Glutamyl-tRNA reductase from Myxococcus xanthus (strain DK1622).